The chain runs to 353 residues: Fe(3+) ions import ATP-binding protein FbpC (353 aa).

In terms of domain architecture, ABC transporter spans 9–239 (VTFQNVRKSF…PASSFIADFM (231 aa)). 41 to 48 (GPSGCGKT) is an ATP binding site.

It belongs to the ABC transporter superfamily. Fe(3+) ion importer (TC 3.A.1.10) family. In terms of assembly, the complex is composed of two ATP-binding proteins (FbpC), two transmembrane proteins (FbpB) and a solute-binding protein (FbpA).

The protein localises to the cell inner membrane. The enzyme catalyses Fe(3+)(out) + ATP + H2O = Fe(3+)(in) + ADP + phosphate + H(+). Part of the ABC transporter complex FbpABC involved in Fe(3+) ions import. Responsible for energy coupling to the transport system. In Rhizobium etli (strain ATCC 51251 / DSM 11541 / JCM 21823 / NBRC 15573 / CFN 42), this protein is Fe(3+) ions import ATP-binding protein FbpC.